Reading from the N-terminus, the 100-residue chain is Small ribosomal subunit protein uS14c (100 aa).

Belongs to the universal ribosomal protein uS14 family. Part of the 30S ribosomal subunit.

It localises to the plastid. The protein localises to the chloroplast. Its function is as follows. Binds 16S rRNA, required for the assembly of 30S particles. This chain is Small ribosomal subunit protein uS14c, found in Cucumis sativus (Cucumber).